A 1920-amino-acid polypeptide reads, in one-letter code: rRNA biogenesis protein RRP5 (1920 aa).

The interval 1–65 is disordered; sequence MVVPQKKFAN…GTSLSKKERE (65 aa). 15 S1 motif domains span residues 128-210, 226-291, 314-384, 400-473, 490-557, 577-646, 661-733, 753-822, 866-930, 958-1031, 1054-1129, 1153-1224, 1260-1334, 1369-1438, and 1459-1529; these read GMKL…LSLR, GMVF…LSSD, GMMV…LTLS, GDIF…GTLK, GMVT…VTYK, GLVT…LSFM, GSIV…LSSK, NSVV…LSLK, GSLI…LSLR, EVHQ…LLLD, GSVV…LSVK, GQCV…LVQR, GDIL…LSLR, DMGV…VTLK, and GDMI…LGMK. 2 disordered regions span residues 1535-1555 and 1605-1652; these read NGDD…ECDP and TDFD…LEHH. Over residues 1620-1652 the composition is skewed to basic and acidic residues; that stretch reads NKDEKSKRREKQKDKEEREKKIQAAEGRLLEHH. HAT repeat units lie at residues 1651 to 1683, 1685 to 1722, 1726 to 1758, 1759 to 1791, 1828 to 1860, and 1862 to 1897; these read HHAP…FMLS, ADIE…LENE, PPEE…YERT, EQYK…SSLK, GVAD…QEIR, and GEDD…YEKS.

In terms of tissue distribution, highly expressed in flowers and at lower levels in roots, leaves, stems and siliques.

It localises to the nucleus. The protein resides in the nucleolus. Involved in the biogenesis of ribosomal RNA (rRNA). Required for the formation of 5.8S rRNA. Required for normal development of female gametophytes. This is rRNA biogenesis protein RRP5 from Arabidopsis thaliana (Mouse-ear cress).